The sequence spans 191 residues: Orotate phosphoribosyltransferase (191 aa).

Residue 114–122 (EDVVTTGKS) participates in 5-phospho-alpha-D-ribose 1-diphosphate binding. Positions 118 and 146 each coordinate orotate.

It belongs to the purine/pyrimidine phosphoribosyltransferase family. PyrE subfamily. As to quaternary structure, homodimer. Mg(2+) serves as cofactor.

It catalyses the reaction orotidine 5'-phosphate + diphosphate = orotate + 5-phospho-alpha-D-ribose 1-diphosphate. The protein operates within pyrimidine metabolism; UMP biosynthesis via de novo pathway; UMP from orotate: step 1/2. Functionally, catalyzes the transfer of a ribosyl phosphate group from 5-phosphoribose 1-diphosphate to orotate, leading to the formation of orotidine monophosphate (OMP). The sequence is that of Orotate phosphoribosyltransferase from Clostridium botulinum (strain Kyoto / Type A2).